Here is a 342-residue protein sequence, read N- to C-terminus: MYTLARQLLFKLSPETSHELSIDLIGAGGRLGLNRLLTPEPASLPVSVLGLEFPNPVGLAAGLDKNGDAIDGFGQLGFGFIEIGTVTPRPQPGNPKPRLFRLPQANAIINRMGFNNHGVDHLLARVRAAKYRGVLGINIGKNFDTPVERAVDDYLICLDKVYADASYVTVNVSSPNTPGLRSLQFGDSLKQLLEALRQRQEALALRHGRRVPLAIKIAPDMTDEETALVAAALVEAGMDAVIATNTTLGREGVEGLPHGDEAGGLSGAPVREKSTHTVKVLAGELGGRLPIIAAGGITEGAHAAEKIAAGASLVQIYSGFIYKGPALIREAVDAIAALPRRN.

Residues 61–65 (AGLDK) and Thr-85 each bind FMN. Lys-65 is a binding site for substrate. 110–114 (NRMGF) contributes to the substrate binding site. FMN-binding residues include Asn-138 and Asn-171. Asn-171 provides a ligand contact to substrate. The Nucleophile role is filled by Ser-174. Substrate is bound at residue Asn-176. Lys-216 and Thr-244 together coordinate FMN. 245-246 (NT) is a binding site for substrate. Residues Gly-267, Gly-296, and 317–318 (YS) contribute to the FMN site.

Belongs to the dihydroorotate dehydrogenase family. Type 2 subfamily. Monomer. Requires FMN as cofactor.

It is found in the cell membrane. The catalysed reaction is (S)-dihydroorotate + a quinone = orotate + a quinol. Its pathway is pyrimidine metabolism; UMP biosynthesis via de novo pathway; orotate from (S)-dihydroorotate (quinone route): step 1/1. Its function is as follows. Catalyzes the conversion of dihydroorotate to orotate with quinone as electron acceptor. The sequence is that of Dihydroorotate dehydrogenase (quinone) from Pseudomonas aeruginosa (strain UCBPP-PA14).